A 503-amino-acid polypeptide reads, in one-letter code: Probable Xaa-Pro aminopeptidase TSTA_094700 (503 aa).

Residues D277, D288, E428, and E467 each contribute to the Mn(2+) site.

This sequence belongs to the peptidase M24B family. It depends on Mn(2+) as a cofactor.

It catalyses the reaction Release of any N-terminal amino acid, including proline, that is linked to proline, even from a dipeptide or tripeptide.. Its function is as follows. Catalyzes the removal of a penultimate prolyl residue from the N-termini of peptides. This Talaromyces stipitatus (strain ATCC 10500 / CBS 375.48 / QM 6759 / NRRL 1006) (Penicillium stipitatum) protein is Probable Xaa-Pro aminopeptidase TSTA_094700.